The sequence spans 186 residues: Lipoprotein signal peptidase (186 aa).

4 helical membrane passes run 8–28 (FFSV…FLDL), 44–64 (IPVL…FVFG), 66–86 (FQDN…FLIF), and 97–117 (AWGW…KFFV). Active-site residues include Asp142 and Asp164. A helical transmembrane segment spans residues 157 to 177 (WPAFNVADSCVSIGIVILLFT).

It belongs to the peptidase A8 family.

It localises to the cell inner membrane. The catalysed reaction is Release of signal peptides from bacterial membrane prolipoproteins. Hydrolyzes -Xaa-Yaa-Zaa-|-(S,diacylglyceryl)Cys-, in which Xaa is hydrophobic (preferably Leu), and Yaa (Ala or Ser) and Zaa (Gly or Ala) have small, neutral side chains.. The protein operates within protein modification; lipoprotein biosynthesis (signal peptide cleavage). Its function is as follows. This protein specifically catalyzes the removal of signal peptides from prolipoproteins. This Leptospira biflexa serovar Patoc (strain Patoc 1 / ATCC 23582 / Paris) protein is Lipoprotein signal peptidase.